The sequence spans 1958 residues: Callose synthase 7 (1958 aa).

The tract at residues 1 to 29 (MASTSSGGRGEDGRPPQMQPVRSMSRKMT) is disordered. The Cytoplasmic portion of the chain corresponds to 1 to 504 (MASTSSGGRG…LYRSFDRMWM (504 aa)). The chain crosses the membrane as a helical span at residues 505–525 (FLVLSLQTMIIVAWHPSGSIL). At 526–535 (AIFTEDVFRN) the chain is on the extracellular side. The chain crosses the membrane as a helical span at residues 536–556 (VLTIFITSAFLNLLQATLDLV). Topologically, residues 557-569 (LSFGAWKSLKFSQ) are cytoplasmic. A helical membrane pass occupies residues 570-590 (IMRYITKFLMAAMWAIMLPIT). The Extracellular portion of the chain corresponds to 591–620 (YSKSVQNPTGLIKFFSSWVGSWLHRSLYDY). Residues 621–641 (AIALYVLPNILAAVFFLLPPL) form a helical membrane-spanning segment. Topologically, residues 642 to 673 (RRIMERSNMRIVTLIMWWAQPKLYIGRGMHEE) are cytoplasmic. Residues 674 to 694 (MFALFKYTFFWVMLLLSKLAF) form a helical membrane-spanning segment. Topologically, residues 695 to 730 (SYYVEILPLVNPTKLIWDMHVVNYEWHEFFPNATHN) are extracellular. The helical transmembrane segment at 731-751 (IGVIIAIWGPIVLVYFMDTQI) threads the bilayer. Residues 752–1496 (WYAIFSTLFG…FDFYRMLSFY (745 aa)) are Cytoplasmic-facing. The helical transmembrane segment at 1497–1517 (FTTVGFYFSSMITVLTVYVFL) threads the bilayer. Over 1518–1547 (YGRLYLVLSGLEKNILQSASVHESNALEQA) the chain is Extracellular. A helical transmembrane segment spans residues 1548 to 1568 (LAAQSVFQLGFLMVLPMVMEI). Over 1569-1576 (GLEKGFRT) the chain is Cytoplasmic. A helical membrane pass occupies residues 1577-1597 (ALGDFIIMQLQLASVFFTFQL). The Extracellular segment spans residues 1598–1640 (GTKAHYFGRTILHGGSKYRATGRGFVVFHAKFAENYRLYSRSH). Residues 1641-1661 (FVKGLELVILLVVYQVYGTSY) form a helical membrane-spanning segment. The Cytoplasmic portion of the chain corresponds to 1662–1667 (RSSSTY). Residues 1668-1688 (MYITFSMWFLVTSWLFAPFIF) traverse the membrane as a helical segment. Residues 1689-1742 (NPSGFEWQKTVDDWTDWKRWMGNRGGIGIVLDKSWESWWDIEQEHLKHTNLRGR) are Extracellular-facing. The chain crosses the membrane as a helical span at residues 1743-1763 (VLEILLALRFLLYQYGIVYHL). The Cytoplasmic segment spans residues 1764 to 1771 (NIARRHTT). A helical membrane pass occupies residues 1772 to 1792 (FLVYGLSWAILLSVLLVLKMV). The Extracellular portion of the chain corresponds to 1793–1812 (SMGRRKFGTDFQVMFRILKA). The helical transmembrane segment at 1813–1833 (LLFLGFLSVMTVLFVVCGLTI) threads the bilayer. The Cytoplasmic portion of the chain corresponds to 1834 to 1835 (SD). A helical transmembrane segment spans residues 1836–1856 (LFASILAFLPTGWAILLIGQA). The Extracellular portion of the chain corresponds to 1857–1878 (LRSVFKGLGFWDSVKELGRAYE). The helical transmembrane segment at 1879–1899 (YIMGLVIFTPIAVLSWFPFVS) threads the bilayer. Residues 1900-1958 (EFQTRLLFNQAFSRGLQISMILAGKKDKETPSTKYLGHTEESFGLEHDTNTFNHYYLWT) lie on the Cytoplasmic side of the membrane.

It belongs to the glycosyltransferase 48 family.

It localises to the cell membrane. The enzyme catalyses [(1-&gt;3)-beta-D-glucosyl](n) + UDP-alpha-D-glucose = [(1-&gt;3)-beta-D-glucosyl](n+1) + UDP + H(+). Its function is as follows. Involved in callose synthesis at the forming cell plate during cytokinesis. During plant growth and development, callose is found as a transitory component of the cell plate in dividing cells, is a major component of pollen mother cell walls and pollen tubes, and is found as a structural component of plasmodesmatal canals. This chain is Callose synthase 7 (CALS7), found in Arabidopsis thaliana (Mouse-ear cress).